The following is a 339-amino-acid chain: Phomopsene synthase (339 aa).

Mg(2+)-binding residues include Asp89, Asp94, Asn224, Ser228, and Glu232.

Belongs to the terpene synthase family. Mg(2+) is required as a cofactor.

It catalyses the reaction (2E,6E,10E)-geranylgeranyl diphosphate = phomopsene + diphosphate. It carries out the reaction (2E,6E,10E)-geranylgeranyl diphosphate = allokutznerene + diphosphate. The protein operates within secondary metabolite biosynthesis; terpenoid biosynthesis. Its function is as follows. Diterpene synthase that catalyzes the conversion of geranylgeranyl diphosphate (GGPP) to phomopsene, a diterpene previously reported from the fungus P.amygdali. Phomopsene is the main product, but the enzyme can also produce allokutznerene (about 50% of phomopsene production activity) and traces of spiroviolene. Cannot use geranyl diphosphate (GPP), farnesyl diphosphate (FPP) and geranylfarnesyl diphosphate (GFPP). The chain is Phomopsene synthase from Allokutzneria albata (Kibdelosporangium albatum).